Reading from the N-terminus, the 114-residue chain is Putative ANKRD40 C-terminal-like protein (114 aa).

The chain is Putative ANKRD40 C-terminal-like protein from Homo sapiens (Human).